An 85-amino-acid polypeptide reads, in one-letter code: Hepcidin (85 aa).

An N-terminal signal peptide occupies residues Met1 to Ala24. Positions Val25 to Gly64 are excised as a propeptide. 4 disulfide bridges follow: Cys66-Cys83, Cys69-Cys72, Cys70-Cys79, and Cys73-Cys82.

As to expression, predominantly expressed in liver.

It localises to the secreted. Seems to act as a signaling molecule involved in the maintenance of iron homeostasis. Seems to be required in conjunction with HFE to regulate both intestinal iron absorption and iron storage in macrophages. Functionally, antimicrobial activity against Gram-negative bacteria such as E.coli. This is Hepcidin (hamp) from Morone chrysops x Morone saxatilis (White bass x Striped bass).